The following is a 380-amino-acid chain: Cytochrome b (380 aa).

Transmembrane regions (helical) follow at residues 34 to 54 (YGSL…FLAM), 78 to 99 (WLMR…YLHI), 114 to 134 (WNIG…GYVL), and 179 to 199 (FFTF…LHLL). Heme b is bound by residues His84 and His98. 2 residues coordinate heme b: His183 and His197. His202 provides a ligand contact to a ubiquinone. Helical transmembrane passes span 227–247 (YKDT…STTN), 289–309 (LGGV…PSLH), 321–341 (LSQL…WIGG), and 348–368 (FILI…VLLP).

The protein belongs to the cytochrome b family. The cytochrome bc1 complex contains 3 respiratory subunits (MT-CYB, CYC1 and UQCRFS1), 2 core proteins (UQCRC1 and UQCRC2) and probably 6 low-molecular weight proteins. Heme b serves as cofactor.

Its subcellular location is the mitochondrion inner membrane. In terms of biological role, component of the ubiquinol-cytochrome c reductase complex (complex III or cytochrome b-c1 complex) that is part of the mitochondrial respiratory chain. The b-c1 complex mediates electron transfer from ubiquinol to cytochrome c. Contributes to the generation of a proton gradient across the mitochondrial membrane that is then used for ATP synthesis. This is Cytochrome b (mt-cyb) from Typhlonectes natans (Rubber eel).